The following is a 224-amino-acid chain: Ribose-5-phosphate isomerase A (224 aa).

Residues 32 to 35, 85 to 88, and 98 to 101 contribute to the substrate site; these read TGST, DGAD, and KGGG. Glutamate 107 functions as the Proton acceptor in the catalytic mechanism. Lysine 125 is a binding site for substrate.

Belongs to the ribose 5-phosphate isomerase family. Homodimer.

It carries out the reaction aldehydo-D-ribose 5-phosphate = D-ribulose 5-phosphate. It participates in carbohydrate degradation; pentose phosphate pathway; D-ribose 5-phosphate from D-ribulose 5-phosphate (non-oxidative stage): step 1/1. Functionally, catalyzes the reversible conversion of ribose-5-phosphate to ribulose 5-phosphate. The polypeptide is Ribose-5-phosphate isomerase A (Pseudomonas putida (strain GB-1)).